We begin with the raw amino-acid sequence, 389 residues long: Methylthioribose-1-phosphate isomerase (389 aa).

The active-site Proton donor is the Asp-258.

It belongs to the eIF-2B alpha/beta/delta subunits family. MtnA subfamily.

It is found in the cytoplasm. Its subcellular location is the nucleus. The catalysed reaction is 5-(methylsulfanyl)-alpha-D-ribose 1-phosphate = 5-(methylsulfanyl)-D-ribulose 1-phosphate. Its pathway is amino-acid biosynthesis; L-methionine biosynthesis via salvage pathway; L-methionine from S-methyl-5-thio-alpha-D-ribose 1-phosphate: step 1/6. Catalyzes the interconversion of methylthioribose-1-phosphate (MTR-1-P) into methylthioribulose-1-phosphate (MTRu-1-P). This chain is Methylthioribose-1-phosphate isomerase, found in Chaetomium globosum (strain ATCC 6205 / CBS 148.51 / DSM 1962 / NBRC 6347 / NRRL 1970) (Soil fungus).